Reading from the N-terminus, the 241-residue chain is Ribonuclease PH (241 aa).

Residues Arg-87 and 125–127 each bind phosphate; that span reads GTR.

This sequence belongs to the RNase PH family. Homohexameric ring arranged as a trimer of dimers.

It catalyses the reaction tRNA(n+1) + phosphate = tRNA(n) + a ribonucleoside 5'-diphosphate. In terms of biological role, phosphorolytic 3'-5' exoribonuclease that plays an important role in tRNA 3'-end maturation. Removes nucleotide residues following the 3'-CCA terminus of tRNAs; can also add nucleotides to the ends of RNA molecules by using nucleoside diphosphates as substrates, but this may not be physiologically important. Probably plays a role in initiation of 16S rRNA degradation (leading to ribosome degradation) during starvation. The sequence is that of Ribonuclease PH from Salinispora arenicola (strain CNS-205).